Reading from the N-terminus, the 491-residue chain is Katanin p60 ATPase-containing subunit A1 (491 aa).

The tract at residues 1 to 29 is interaction with KATNB1; the sequence is MSLLMISENVKLAREYALLGNYDSAMVYY. The segment at 1-75 is interaction with dynein and NDEL1; that stretch reads MSLLMISENV…VKDIMKTLES (75 aa). Residues 1–185 form an interaction with microtubules region; that stretch reads MSLLMISENV…EPETNKFDST (185 aa). Residues serine 42 and serine 109 each carry the phosphoserine; by DYRK2 modification. The tract at residues 87 to 185 is disordered; the sequence is QHDLPASEGE…EPETNKFDST (99 aa). A Phosphothreonine; by DYRK2 modification is found at threonine 133. Over residues 145-169 the composition is skewed to basic and acidic residues; it reads HNDRGKAVRCREKKEQNKGREEKNK. Serine 170 bears the Phosphoserine mark. 249 to 256 provides a ligand contact to ATP; it reads GPPGTGKT.

This sequence belongs to the AAA ATPase family. Katanin p60 subunit A1 subfamily. Can homooligomerize into hexameric rings, which may be promoted by interaction with microtubules. Interacts with KATNB1, which may serve as a targeting subunit. Interacts with ASPM; the katanin complex formation KATNA1:KATNB1 is required for the association of ASPM Interacts with dynein and NDEL1. Associates with the E3 ligase complex containing DYRK2, EDD/UBR5, DDB1 and DCAF1 proteins (EDVP complex). Interacts with KLHL42 (via the kelch domains). Interacts with CUL3; the interaction is enhanced by KLHL42. Interacts with KATNB1 and KATNBL1. Interacts with CAMSAP2 and CAMSAP3; leading to regulate the length of CAMSAP-decorated microtubule stretches. Phosphorylation by DYRK2 triggers ubiquitination and subsequent degradation. In terms of processing, ubiquitinated by the BCR(KLHL42) E3 ubiquitin ligase complex, leading to its proteasomal degradation. Ubiquitinated by the EDVP E3 ligase complex and subsequently targeted for proteasomal degradation.

The protein resides in the cytoplasm. Its subcellular location is the midbody. It localises to the cytoskeleton. The protein localises to the microtubule organizing center. It is found in the centrosome. The protein resides in the spindle pole. Its subcellular location is the spindle. The enzyme catalyses n ATP + n H2O + a microtubule = n ADP + n phosphate + (n+1) alpha/beta tubulin heterodimers.. ATPase activity is stimulated by microtubules, which promote homooligomerization. ATP-dependent microtubule severing is stimulated by interaction with KATNB1. Its function is as follows. Catalytic subunit of a complex which severs microtubules in an ATP-dependent manner. Microtubule severing may promote rapid reorganization of cellular microtubule arrays and the release of microtubules from the centrosome following nucleation. Microtubule release from the mitotic spindle poles may allow depolymerization of the microtubule end proximal to the spindle pole, leading to poleward microtubule flux and poleward motion of chromosome. Microtubule release within the cell body of neurons may be required for their transport into neuronal processes by microtubule-dependent motor proteins. This transport is required for axonal growth. The sequence is that of Katanin p60 ATPase-containing subunit A1 from Macaca fascicularis (Crab-eating macaque).